Reading from the N-terminus, the 572-residue chain is MARSLLKIHRYFRRKPVRFFSFILLYLTAGSLVFLHSGFSSDSSTAGIAGSGSDPLLSEGRGGTGGGSATSEGLGLLGRVFKETRRTPRRFGPPWMKESRGQDAPEWAGRGFDHTSSWSHGAKGRTTKEMDDGRAKYIGCYVDDTQKRALRGVSFLDYKKMTVFRCQDNCAERGYLYAGLEFGAECYCGHKIQAPNVSESECNMECKGEKSNLCGGPNRLSIYRLELSQESARRYGSAIFKGCFRRPDNVTLALPASAVMQNMSVDKCVDMCTEKEFSLAALAGDKCHCGFPTPLFNLHEHEDEELCLHRCTGEDFESCGNRDFFVVYQTQVQDNRCMDRRFLPTRSKHLMALASFPGAGNTWARHLIELATGYYTGSYYFDGSLYNKGFKGERDHWRSGRTICIKTHESGKKEIETFDASILMIRNPYKALMAEFNRKYGGHIGFASQAHWRGKEWPEFVKNYAPWWASHTLDWLKYGKKVQVVHFEDLKRDLFSQLKGMVIFLGLEVSEDRLLCVEGQKDGNFKRSGLRKLEYDPYTVEMRATIDRLIKTVDMELRKRNLSGVPDEYRPR.

Topologically, residues Met1–Arg18 are cytoplasmic. Residues Phe19–Phe39 traverse the membrane as a helical; Signal-anchor for type II membrane protein segment. Over Ser40–Arg572 the chain is Extracellular. 2 consecutive WSC domains span residues Arg134 to Glu226 and Ser237 to Gln331. Asn196, Asn249, Asn262, and Asn561 each carry an N-linked (GlcNAc...) asparagine glycan.

The protein belongs to the WSCD family.

The protein resides in the golgi apparatus membrane. In terms of biological role, sialate:O-sulfotransferase which catalyzes 8-O-sulfation at the Sia-glycan level using 3'-phosphoadenosine 5'-phosphosulfate (PAPS) as a donor, forming 8-O-sulfated Sia (Sia8S)-glycans. This is Sialate:O-sulfotransferase 2 (wscd2) from Danio rerio (Zebrafish).